Here is a 177-residue protein sequence, read N- to C-terminus: Adenine phosphoribosyltransferase (177 aa).

The protein belongs to the purine/pyrimidine phosphoribosyltransferase family. In terms of assembly, homodimer.

It is found in the cytoplasm. It catalyses the reaction AMP + diphosphate = 5-phospho-alpha-D-ribose 1-diphosphate + adenine. It participates in purine metabolism; AMP biosynthesis via salvage pathway; AMP from adenine: step 1/1. Its function is as follows. Catalyzes a salvage reaction resulting in the formation of AMP, that is energically less costly than de novo synthesis. This is Adenine phosphoribosyltransferase from Chlorobium chlorochromatii (strain CaD3).